Consider the following 580-residue polypeptide: NADH-quinone oxidoreductase subunit C/D (580 aa).

Residues 1–171 form an NADH dehydrogenase I subunit C region; the sequence is MSLDQAIPEA…PPFVLTDRLF (171 aa). The segment at 195 to 580 is NADH dehydrogenase I subunit D; the sequence is ELMVLNFGPH…IDFVMSDVDR (386 aa).

In the N-terminal section; belongs to the complex I 30 kDa subunit family. It in the C-terminal section; belongs to the complex I 49 kDa subunit family. As to quaternary structure, NDH-1 is composed of 13 different subunits. Subunits NuoB, CD, E, F, and G constitute the peripheral sector of the complex.

It localises to the cell inner membrane. It catalyses the reaction a quinone + NADH + 5 H(+)(in) = a quinol + NAD(+) + 4 H(+)(out). NDH-1 shuttles electrons from NADH, via FMN and iron-sulfur (Fe-S) centers, to quinones in the respiratory chain. The immediate electron acceptor for the enzyme in this species is believed to be ubiquinone. Couples the redox reaction to proton translocation (for every two electrons transferred, four hydrogen ions are translocated across the cytoplasmic membrane), and thus conserves the redox energy in a proton gradient. The protein is NADH-quinone oxidoreductase subunit C/D of Cereibacter sphaeroides (strain ATCC 17029 / ATH 2.4.9) (Rhodobacter sphaeroides).